Here is a 238-residue protein sequence, read N- to C-terminus: Ribonuclease PH (238 aa).

Phosphate is bound by residues Arg-86 and 124–126 (GTR).

The protein belongs to the RNase PH family. In terms of assembly, homohexameric ring arranged as a trimer of dimers.

The catalysed reaction is tRNA(n+1) + phosphate = tRNA(n) + a ribonucleoside 5'-diphosphate. In terms of biological role, phosphorolytic 3'-5' exoribonuclease that plays an important role in tRNA 3'-end maturation. Removes nucleotide residues following the 3'-CCA terminus of tRNAs; can also add nucleotides to the ends of RNA molecules by using nucleoside diphosphates as substrates, but this may not be physiologically important. Probably plays a role in initiation of 16S rRNA degradation (leading to ribosome degradation) during starvation. This is Ribonuclease PH from Cupriavidus metallidurans (strain ATCC 43123 / DSM 2839 / NBRC 102507 / CH34) (Ralstonia metallidurans).